The primary structure comprises 348 residues: MIFNSLSIKRLSSTXTSLPFKKHAKLNFDLYSPQHSTYGKLPYHCQEPIIFLHGIYGYSKSFNSDYQQLSNLLHTPIYSVDMRCHGETENCLPFTYDALAGDLDNFVITHNIKKPSLIGFSLGAKLAMLAILKSPHLYTSGVIVDNVPLKQPRIKPNLTAFGNALRDSVFKSGVKRNDPSWISKSFNVMKDVCSDMPANFYLLHNIQPKPSYLKKYSTEESENSLFCKVPIRELSSHVVENVPDWPEEDLAGVKTDVPILVVKASTSGFVNEDGVAALXKHFSDFTIVEVAGTHLVMKERPQEYISAVGRWFYQQNCKKAAALTKAKKTNDQKITQQPILSYKKIEIA.

A mitochondrion-targeting transit peptide spans M1–P19. In terms of domain architecture, AB hydrolase-1 spans I49–I305. Catalysis depends on charge relay system residues S121, D145, and H294.

This sequence belongs to the AB hydrolase superfamily.

The protein localises to the mitochondrion. The catalysed reaction is ethanol + acetyl-CoA = ethyl acetate + CoA. The enzyme catalyses acetyl-CoA + H2O = acetate + CoA + H(+). It carries out the reaction ethyl acetate + H2O = ethanol + acetate + H(+). Functionally, alcohol acetyltransferase that catalyzes the synthesis of ethyl acetate from ethanol and acetyl-CoA. Can also function as a thioesterase by hydrolyzing acetyl-CoA in the absence of ethanol, as well as esterase hydrolyzing ethyl acetate. The chain is Ethanol acetyltransferase 2 (EAT2) from Hanseniaspora uvarum (Yeast).